The primary structure comprises 182 residues: NADH-quinone oxidoreductase subunit I (182 aa).

2 consecutive 4Fe-4S ferredoxin-type domains span residues 52–82 (LTRD…LQKA) and 92–121 (DFFR…LTPD). Cys62, Cys65, Cys68, Cys72, Cys101, Cys104, Cys107, and Cys111 together coordinate [4Fe-4S] cluster.

This sequence belongs to the complex I 23 kDa subunit family. In terms of assembly, NDH-1 is composed of 13 different subunits. Subunits NuoA, H, J, K, L, M, N constitute the membrane sector of the complex. [4Fe-4S] cluster serves as cofactor.

It is found in the cell inner membrane. It catalyses the reaction a quinone + NADH + 5 H(+)(in) = a quinol + NAD(+) + 4 H(+)(out). NDH-1 shuttles electrons from NADH, via FMN and iron-sulfur (Fe-S) centers, to quinones in the respiratory chain. The immediate electron acceptor for the enzyme in this species is believed to be ubiquinone. Couples the redox reaction to proton translocation (for every two electrons transferred, four hydrogen ions are translocated across the cytoplasmic membrane), and thus conserves the redox energy in a proton gradient. In Pseudomonas syringae pv. tomato (strain ATCC BAA-871 / DC3000), this protein is NADH-quinone oxidoreductase subunit I.